The primary structure comprises 40 residues: Omega-conotoxin RsXXVIA (40 aa).

In terms of processing, contains 4 disulfide bonds. In terms of tissue distribution, expressed by the venom duct.

It is found in the secreted. Its function is as follows. Omega-conotoxins act at presynaptic membranes, they bind and block voltage-gated calcium channels (Cav). This toxin inhibits rat Cav2.2/CACNA1B calcium channels in a dose-dependent manner (EC(50)=2.8 uM), whose effect is partially reversed after washing. In vivo, when injected into mice, it shows both an analgesic effect in acute thermal pain at 30 and 45 minutes post-injection and an anti-nociceptive effect in a formalin chronic pain test. The chain is Omega-conotoxin RsXXVIA from Conus regularis (Regular cone).